Reading from the N-terminus, the 156-residue chain is S-ribosylhomocysteine lyase (156 aa).

His53, His57, and Cys122 together coordinate Fe cation.

It belongs to the LuxS family. Homodimer. The cofactor is Fe cation.

The enzyme catalyses S-(5-deoxy-D-ribos-5-yl)-L-homocysteine = (S)-4,5-dihydroxypentane-2,3-dione + L-homocysteine. Functionally, involved in the synthesis of autoinducer 2 (AI-2) which is secreted by bacteria and is used to communicate both the cell density and the metabolic potential of the environment. The regulation of gene expression in response to changes in cell density is called quorum sensing. Catalyzes the transformation of S-ribosylhomocysteine (RHC) to homocysteine (HC) and 4,5-dihydroxy-2,3-pentadione (DPD). This Finegoldia magna (strain ATCC 29328 / DSM 20472 / WAL 2508) (Peptostreptococcus magnus) protein is S-ribosylhomocysteine lyase.